The following is a 326-amino-acid chain: tRNA-modifying protein YgfZ (326 aa).

Residues Trp-27 and Trp-189 each contribute to the folate site.

It belongs to the tRNA-modifying YgfZ family.

The protein resides in the cytoplasm. In terms of biological role, folate-binding protein involved in regulating the level of ATP-DnaA and in the modification of some tRNAs. It is probably a key factor in regulatory networks that act via tRNA modification, such as initiation of chromosomal replication. The protein is tRNA-modifying protein YgfZ of Escherichia coli O17:K52:H18 (strain UMN026 / ExPEC).